The primary structure comprises 380 residues: Protein COS12 (380 aa).

Residues 1–70 (MDGAKFENTV…WKIRGKRHYL (70 aa)) are Cytoplasmic-facing. Residues 71–91 (VIVTALMFEVLYFLWTYSYIF) form a helical membrane-spanning segment. The Extracellular portion of the chain corresponds to 92-231 (RERTLGKQVS…KLLWAFKEVT (140 aa)). The helical transmembrane segment at 232–252 (IMNSRFAFFSIAYLNGLLTIP) threads the bilayer. Over 253–257 (RLRNS) the chain is Cytoplasmic. The chain crosses the membrane as a helical span at residues 258–278 (LHILYVCAVLSSMIIEYLIGI). Over 279-380 (DKFRFKSMNL…KEAQSACNDV (102 aa)) the chain is Extracellular.

The protein belongs to the DUP/COS family.

It localises to the membrane. The polypeptide is Protein COS12 (COS12) (Saccharomyces cerevisiae (strain ATCC 204508 / S288c) (Baker's yeast)).